We begin with the raw amino-acid sequence, 149 residues long: Cytochrome c oxidase subunit 5A, mitochondrial (149 aa).

The protein belongs to the cytochrome c oxidase subunit 5A family. In terms of assembly, component of the cytochrome c oxidase (complex IV, CIV), a multisubunit enzyme composed of a catalytic core of 3 subunits and several supernumerary subunits. The complex exists as a monomer or a dimer and forms supercomplexes (SCs) in the inner mitochondrial membrane with ubiquinol-cytochrome c oxidoreductase (cytochrome b-c1 complex, complex III, CIII).

The protein localises to the mitochondrion inner membrane. It participates in energy metabolism; oxidative phosphorylation. Component of the cytochrome c oxidase, the last enzyme in the mitochondrial electron transport chain which drives oxidative phosphorylation. The respiratory chain contains 3 multisubunit complexes succinate dehydrogenase (complex II, CII), ubiquinol-cytochrome c oxidoreductase (cytochrome b-c1 complex, complex III, CIII) and cytochrome c oxidase (complex IV, CIV), that cooperate to transfer electrons derived from NADH and succinate to molecular oxygen, creating an electrochemical gradient over the inner membrane that drives transmembrane transport and the ATP synthase. Cytochrome c oxidase is the component of the respiratory chain that catalyzes the reduction of oxygen to water. Electrons originating from reduced cytochrome c in the intermembrane space (IMS) are transferred via the dinuclear copper A center (CU(A)) of subunit 2 and heme A of subunit 1 to the active site in subunit 1, a binuclear center (BNC) formed by heme A3 and copper B (CU(B)). The BNC reduces molecular oxygen to 2 water molecules using 4 electrons from cytochrome c in the IMS and 4 protons from the mitochondrial matrix. This chain is Cytochrome c oxidase subunit 5A, mitochondrial, found in Drosophila melanogaster (Fruit fly).